The following is a 355-amino-acid chain: Dual-specificity RNA methyltransferase RlmN (355 aa).

The active-site Proton acceptor is the Glu86. Residues 105–338 (KEARYTVCVS…CTIRESKGLD (234 aa)) form the Radical SAM core domain. Cys112 and Cys343 are oxidised to a cystine. Residues Cys119, Cys123, and Cys126 each contribute to the [4Fe-4S] cluster site. Residues 169-170 (GE), Ser201, 224-226 (SLH), and Asn300 contribute to the S-adenosyl-L-methionine site. Residue Cys343 is the S-methylcysteine intermediate of the active site.

This sequence belongs to the radical SAM superfamily. RlmN family. Requires [4Fe-4S] cluster as cofactor.

It localises to the cytoplasm. It carries out the reaction adenosine(2503) in 23S rRNA + 2 reduced [2Fe-2S]-[ferredoxin] + 2 S-adenosyl-L-methionine = 2-methyladenosine(2503) in 23S rRNA + 5'-deoxyadenosine + L-methionine + 2 oxidized [2Fe-2S]-[ferredoxin] + S-adenosyl-L-homocysteine. The enzyme catalyses adenosine(37) in tRNA + 2 reduced [2Fe-2S]-[ferredoxin] + 2 S-adenosyl-L-methionine = 2-methyladenosine(37) in tRNA + 5'-deoxyadenosine + L-methionine + 2 oxidized [2Fe-2S]-[ferredoxin] + S-adenosyl-L-homocysteine. Specifically methylates position 2 of adenine 2503 in 23S rRNA and position 2 of adenine 37 in tRNAs. m2A2503 modification seems to play a crucial role in the proofreading step occurring at the peptidyl transferase center and thus would serve to optimize ribosomal fidelity. The polypeptide is Dual-specificity RNA methyltransferase RlmN (Nitratiruptor sp. (strain SB155-2)).